The sequence spans 330 residues: Src kinase-associated phosphoprotein 2-A (330 aa).

The tract at residues 53-77 (QDFQDKAETDDQEENDGFSLPPDAV) is disordered. Residues 105–208 (DYLRAGYLEK…WINVIMNARG (104 aa)) form the PH domain. Positions 228 to 261 (SHEEDIYEELPEESEKPVTGSETPKATPVPVNNT) are disordered. The span at 247-261 (GSETPKATPVPVNNT) shows a compositional bias: polar residues. An SH3 domain is found at 268–329 (DYANFYRGLW…PKAYIIEMYD (62 aa)).

Belongs to the SKAP family. In terms of processing, phosphorylated on tyrosines.

Its subcellular location is the cytoplasm. May be involved in B-cell and macrophage adhesion processes. May play a role in src signaling pathway. The protein is Src kinase-associated phosphoprotein 2-A (skap2-a) of Xenopus laevis (African clawed frog).